A 367-amino-acid polypeptide reads, in one-letter code: Inhibin alpha chain (367 aa).

An N-terminal signal peptide occupies residues 1 to 20 (MVPPLPLLLLLLLVPQGGHG). A propeptide spanning residues 21-63 (CQGSELDREIVLAKVRALFLDALGPPAVTGEGGDPGVRRLPRR) is cleaved from the precursor. The propeptide at 64–233 (HALGGFARRG…PPSGGERTRR (170 aa)) is inhibin alpha N-terminal region. Residues Asn-147 and Asn-269 are each glycosylated (N-linked (GlcNAc...) asparagine). Intrachain disulfides connect Cys-263–Cys-329, Cys-292–Cys-364, and Cys-296–Cys-366.

It belongs to the TGF-beta family. Dimeric, linked by one or more disulfide bonds. Activin B is a dimer of alpha and beta-B. Inhibin A is a dimer of alpha and beta-A. Inhibin B is a dimer of alpha and beta-B. Interacts with TGFBR3L; this interaction regulates female fertility. Proteolytic processing yields a number of bioactive forms, consisting either solely of the mature alpha chain, of the most N-terminal propeptide linked through a disulfide bond to the mature alpha chain, or of the entire proprotein.

The protein localises to the secreted. Its function is as follows. Inhibins and activins inhibit and activate, respectively, the secretion of follitropin by the pituitary gland. Inhibins/activins are involved in regulating a number of diverse functions such as hypothalamic and pituitary hormone secretion, gonadal hormone secretion, germ cell development and maturation, erythroid differentiation, insulin secretion, nerve cell survival, embryonic axial development or bone growth, depending on their subunit composition. Inhibins appear to oppose the functions of activins. In terms of biological role, inhibin A is a dimer of alpha/INHA and beta-A/INHBA that functions as a feedback regulator in the hypothalamic-pituitary-gonadal (HPG) axis. Inhibits the secretion of FSH from the anterior pituitary gland by acting on pituitary gonadotrope cells. Antagonizes activin A by binding to the proteoglycan, betaglycan, and forming a stable complex with and, thereby, sequestering type II activin receptors while excluding type I receptor. Functionally, inhibin B is a dimer of alpha and beta-B that plays a crucial role in the regulation of the reproductive system by inhibiting the secretion of follicle-stimulating hormone (FSH) from the anterior pituitary gland. Thereby, maintains reproductive homeostasis in both males and females. Acts as a more potent suppressor of FSH release than inhibin A. Functions as competitive receptor antagonist binding activin type II receptors with high affinity in the presence of the TGF-beta type III coreceptor/TGFBR3L. This is Inhibin alpha chain (INHA) from Equus caballus (Horse).